The following is a 100-amino-acid chain: Small ribosomal subunit protein uS14c (100 aa).

Belongs to the universal ribosomal protein uS14 family. Part of the 30S ribosomal subunit.

It is found in the plastid. The protein resides in the chloroplast. Functionally, binds 16S rRNA, required for the assembly of 30S particles. The polypeptide is Small ribosomal subunit protein uS14c (Thalassiosira pseudonana (Marine diatom)).